Reading from the N-terminus, the 423-residue chain is Phytoene synthase, chloroplastic (423 aa).

A chloroplast-targeting transit peptide spans 1 to 136; that stretch reads MVVAILRVVS…DAYDRCGEVC (136 aa).

Belongs to the phytoene/squalene synthase family. Monomer.

The protein resides in the plastid. The protein localises to the chloroplast. The enzyme catalyses 2 (2E,6E,10E)-geranylgeranyl diphosphate = 15-cis-phytoene + 2 diphosphate. It participates in carotenoid biosynthesis; phytoene biosynthesis; all-trans-phytoene from geranylgeranyl diphosphate: step 1/1. In terms of biological role, catalyzes the reaction from prephytoene diphosphate to phytoene. The polypeptide is Phytoene synthase, chloroplastic (PSY) (Narcissus pseudonarcissus (Daffodil)).